We begin with the raw amino-acid sequence, 1876 residues long: Phenolphthiocerol/phthiocerol polyketide synthase subunit A (1876 aa).

Positions 9-83 (ADLRHWLIDY…ALAAYLAAPE (75 aa)) constitute a Carrier 1 domain. Residue S43 is modified to O-(pantetheine 4'-phosphoryl)serine. The Ketosynthase family 3 (KS3) domain occupies 101 to 526 (DEPIAVVGMG…GTNAHVVIEQ (426 aa)). Active-site for beta-ketoacyl synthase activity residues include C273, H408, and H448. Residues 624–950 (EGSPGPGTVF…NLNKAHTIHP (327 aa)) form an acyltransferase region. S720 (for malonyltransferase activity) is an active-site residue. Residues 997 to 1112 (HTTVATVSAS…AQLSSSPSDS (116 aa)) are N-terminal hotdog fold. The 271-residue stretch at 997–1267 (HTTVATVSAS…YRALDFGLDV (271 aa)) folds into the PKS/mFAS DH domain. The active-site Proton acceptor; for dehydratase activity is the H1027. The tract at residues 1104 to 1130 (QLSSSPSDSASSLNEHHRANGQPPERA) is disordered. Positions 1106–1115 (SSSPSDSASS) are enriched in low complexity. A C-terminal hotdog fold region spans residues 1130 to 1267 (AHRDLIPDLA…YRALDFGLDV (138 aa)). D1186 serves as the catalytic Proton donor; for dehydratase activity. Residues 1491 to 1728 (AAYLITGGLG…DGYDVAQAVV (238 aa)) form a beta-ketoacyl reductase region. Residue 1492–1551 (AYLITGGLGALGLLMADWLADRGAHRLVLTGRTPLPPRRDWQLDTLDTELRRRIDAIRAL) participates in NADP(+) binding. The region spanning 1759–1836 (EVRSELEQGL…SLASYLAKRV (78 aa)) is the Carrier 2 domain. S1796 bears the O-(pantetheine 4'-phosphoryl)serine mark.

NADP(+) is required as a cofactor. Requires pantetheine 4'-phosphate as cofactor.

The enzyme catalyses icosanoyl-[(phenol)carboxyphthiodiolenone synthase] + 2 (S)-methylmalonyl-CoA + 3 malonyl-CoA + 5 NADPH + 10 H(+) = C32-carboxyphthiodiolenone-[(phenol)carboxyphthiodiolenone synthase] + 5 CO2 + 5 NADP(+) + 5 CoA + 2 H2O. It carries out the reaction docosanoyl-[(phenol)carboxyphthiodiolenone synthase] + 2 (S)-methylmalonyl-CoA + 3 malonyl-CoA + 5 NADPH + 10 H(+) = C34-carboxyphthiodiolenone-[(phenol)carboxyphthiodiolenone synthase] + 5 CO2 + 5 NADP(+) + 5 CoA + 2 H2O. It catalyses the reaction 17-(4-hydroxyphenyl)heptadecanoyl-[(phenol)carboxyphthiodiolenone synthase] + 2 (S)-methylmalonyl-CoA + 3 malonyl-CoA + 5 NADPH + 10 H(+) = C35-(phenol)carboxyphthiodiolenone-[(phenol)carboxyphthiodiolenone synthase] + 5 CO2 + 5 NADP(+) + 5 CoA + 2 H2O. The catalysed reaction is 19-(4-hydroxyphenyl)nonadecanoyl-[(phenol)carboxyphthiodiolenone synthase] + 2 (S)-methylmalonyl-CoA + 3 malonyl-CoA + 5 NADPH + 10 H(+) = C37-(phenol)carboxyphthiodiolenone-[(phenol)carboxyphthiodiolenone synthase] + 5 CO2 + 5 NADP(+) + 5 CoA + 2 H2O. It participates in lipid metabolism; fatty acid biosynthesis. In terms of biological role, part of the PpsABCDE complex involved in the biosynthesis of the lipid core common to phthiocerols and phenolphthiocerols by successive additions of malonyl-CoA or methylmalonyl-CoA extender units. PpsA can accept as substrate the activated forms of either icosanoyl (C20), docosanoyl (C22) or lignoceroyl (C24) groups from FadD26, or a (4-hydroxyphenyl)-C17 or (4-hydroxyphenyl)-C19 fatty acyl from FadD29. PpsA initiates the biosynthesis and extends its substrate using a malonyl-CoA extender unit. The PpsB and PpsC proteins add the second and third malonyl-CoA extender units. PpsD adds an (R)-methylmalonyl unit and PpsE adds a second (R)-methylmalonyl unit. The incorporation of the methylmalonyl units results in formation of two branched methyl groups in the elongated product. The polypeptide is Phenolphthiocerol/phthiocerol polyketide synthase subunit A (ppsA) (Mycobacterium bovis (strain ATCC BAA-935 / AF2122/97)).